The chain runs to 265 residues: Hydroxyethylthiazole kinase (265 aa).

Residue Met50 coordinates substrate. ATP contacts are provided by Arg125 and Thr171. Gly198 is a binding site for substrate.

Belongs to the Thz kinase family. Mg(2+) serves as cofactor.

It catalyses the reaction 5-(2-hydroxyethyl)-4-methylthiazole + ATP = 4-methyl-5-(2-phosphooxyethyl)-thiazole + ADP + H(+). It participates in cofactor biosynthesis; thiamine diphosphate biosynthesis; 4-methyl-5-(2-phosphoethyl)-thiazole from 5-(2-hydroxyethyl)-4-methylthiazole: step 1/1. In terms of biological role, catalyzes the phosphorylation of the hydroxyl group of 4-methyl-5-beta-hydroxyethylthiazole (THZ). The sequence is that of Hydroxyethylthiazole kinase from Salmonella paratyphi C (strain RKS4594).